Consider the following 181-residue polypeptide: Ninjurin-B (181 aa).

The segment covering 1–10 has biased composition (basic and acidic residues); the sequence is MDSGEVKISL. The tract at residues 1-72 is disordered; it reads MDSGEVKISL…SNKKCSSDLS (72 aa). The Extracellular portion of the chain corresponds to 1 to 115; sequence MDSGEVKISL…YNDKASTYIY (115 aa). A compositionally biased stretch (polar residues) spans 12–26; sequence DSPSSGESFASTTSG. A compositionally biased stretch (basic and acidic residues) spans 33–49; sequence RDLDIQVHESHIKDDQF. Residues 80-91 form a helix alpha1 region; it reads NKNVAEGLMDIA. The segment at 94–110 is helix alpha2; that stretch reads SANANQLRFLITYNDKA. A helical transmembrane segment spans residues 116–136; it reads SMIMVILSLVLQLLVGIMLIF. The Cytoplasmic portion of the chain corresponds to 137-153; sequence KRRLKRFRNRSYERTND. The chain crosses the membrane as a helical span at residues 154–174; the sequence is LLVMGVFMITVINILLAAFTT. Over 175–181 the chain is Extracellular; the sequence is TDGGGSH.

The protein belongs to the ninjurin family.

It localises to the membrane. In terms of biological role, effector of non-apoptotic necrotic cell death that mediates plasma membrane rupture (cytolysis): oligomerizes in response to death stimuli and promotes plasma membrane rupture by introducing hydrophilic faces of 2 alpha helices into the hydrophobic membrane, leading to release intracellular molecules that propagate the inflammatory response. Also acts as a homophilic transmembrane adhesion molecule that promotes cell adhesion by mediating homophilic interactions via its extracellular region. The polypeptide is Ninjurin-B (Drosophila melanogaster (Fruit fly)).